The following is a 267-amino-acid chain: 5'-nucleotidase SurE (267 aa).

The a divalent metal cation site is built by D14, D15, S45, and N100.

It belongs to the SurE nucleotidase family. The cofactor is a divalent metal cation.

Its subcellular location is the cytoplasm. The enzyme catalyses a ribonucleoside 5'-phosphate + H2O = a ribonucleoside + phosphate. Nucleotidase that shows phosphatase activity on nucleoside 5'-monophosphates. In Methanosarcina mazei (strain ATCC BAA-159 / DSM 3647 / Goe1 / Go1 / JCM 11833 / OCM 88) (Methanosarcina frisia), this protein is 5'-nucleotidase SurE.